Reading from the N-terminus, the 160-residue chain is Small ribosomal subunit protein uS7 (160 aa).

This sequence belongs to the universal ribosomal protein uS7 family. Part of the 30S ribosomal subunit. Contacts proteins S9 and S11.

Functionally, one of the primary rRNA binding proteins, it binds directly to 16S rRNA where it nucleates assembly of the head domain of the 30S subunit. Is located at the subunit interface close to the decoding center, probably blocks exit of the E-site tRNA. This is Small ribosomal subunit protein uS7 from Ehrlichia canis (strain Jake).